The following is a 300-amino-acid chain: Ubiquitin carboxyl-terminal hydrolase 2 (300 aa).

One can recognise a UCH catalytic domain in the interval 2-220; sequence SWTTIESDAG…IRFNLMVICK (219 aa). Cysteine 83 acts as the Nucleophile in catalysis. Residue histidine 159 is the Proton donor of the active site. A ULD domain is found at 261–290; sequence NFVGLFVELSKLLVKDRIDKNTWNSTLETA.

It belongs to the peptidase C12 family. As to quaternary structure, component of the 26S proteasome. Interacts with rpn10.

It is found in the nucleus. It carries out the reaction Thiol-dependent hydrolysis of ester, thioester, amide, peptide and isopeptide bonds formed by the C-terminal Gly of ubiquitin (a 76-residue protein attached to proteins as an intracellular targeting signal).. Functionally, ubiquitin-protein hydrolase is involved both in the processing of ubiquitin precursors and of ubiquitinated proteins. This enzyme is a thiol protease that recognizes and hydrolyzes a peptide bond at the C-terminal glycine of ubiquitin. The polypeptide is Ubiquitin carboxyl-terminal hydrolase 2 (uch2) (Schizosaccharomyces pombe (strain 972 / ATCC 24843) (Fission yeast)).